The sequence spans 815 residues: Lon protease 1 (815 aa).

Positions 19 to 212 constitute a Lon N-terminal domain; that stretch reads MPLLPLRDIV…KLFGQIRSEI (194 aa). 364–371 contributes to the ATP binding site; sequence GPPGVGKT. The Lon proteolytic domain occupies 601–782; the sequence is KDEIGLAVGL…DDVLRKAMVV (182 aa). Catalysis depends on residues Ser-688 and Lys-731. The segment at 793–815 is disordered; sequence EAGAQQAVMFEQKPPAADEIRAH.

This sequence belongs to the peptidase S16 family. As to quaternary structure, homohexamer. Organized in a ring with a central cavity.

The protein resides in the cytoplasm. The enzyme catalyses Hydrolysis of proteins in presence of ATP.. Its function is as follows. ATP-dependent serine protease that mediates the selective degradation of mutant and abnormal proteins as well as certain short-lived regulatory proteins. Required for cellular homeostasis and for survival from DNA damage and developmental changes induced by stress. Degrades polypeptides processively to yield small peptide fragments that are 5 to 10 amino acids long. Binds to DNA in a double-stranded, site-specific manner. This chain is Lon protease 1, found in Syntrophobacter fumaroxidans (strain DSM 10017 / MPOB).